Consider the following 73-residue polypeptide: U-scoloptoxin(15)-Sm3a (73 aa).

An N-terminal signal peptide occupies residues 1–23 (MERKVFLLLFVIVLLTLPGFMSA).

Belongs to the scoloptoxin-15 family. Contains 2 disulfide bonds. In terms of tissue distribution, expressed by the venom gland.

It localises to the secreted. In Scolopendra morsitans (Tanzanian blue ringleg centipede), this protein is U-scoloptoxin(15)-Sm3a.